A 319-amino-acid polypeptide reads, in one-letter code: Acetyl esterase (319 aa).

The Involved in the stabilization of the negatively charged intermediate by the formation of the oxyanion hole motif lies at 91-93; it reads HGG. Active-site residues include Ser165, Asp262, and His292.

Belongs to the 'GDXG' lipolytic enzyme family. In terms of assembly, homodimer. Interacts with MalT and MelA.

It is found in the cytoplasm. In terms of biological role, displays esterase activity towards short chain fatty esters (acyl chain length of up to 8 carbons). Able to hydrolyze triacetylglycerol (triacetin) and tributyrylglycerol (tributyrin), but not trioleylglycerol (triolein) or cholesterol oleate. Negatively regulates MalT activity by antagonizing maltotriose binding. Inhibits MelA galactosidase activity. The polypeptide is Acetyl esterase (Escherichia coli O7:K1 (strain IAI39 / ExPEC)).